The primary structure comprises 269 residues: UPF0162 protein bbp_163 (269 aa).

It belongs to the UPF0162 family.

The chain is UPF0162 protein bbp_163 from Buchnera aphidicola subsp. Baizongia pistaciae (strain Bp).